Consider the following 425-residue polypeptide: Sucrose-phosphatase 1 (425 aa).

The protein belongs to the sucrose phosphatase family. Homodimer. The cofactor is Mg(2+).

It catalyses the reaction sucrose 6(F)-phosphate + H2O = sucrose + phosphate. Its pathway is glycan biosynthesis; sucrose biosynthesis; sucrose from D-fructose 6-phosphate and UDP-alpha-D-glucose: step 2/2. Its activity is regulated as follows. Inhibited by EDTA. In terms of biological role, catalyzes the final step of sucrose synthesis. In Nicotiana tabacum (Common tobacco), this protein is Sucrose-phosphatase 1 (SPP1).